The chain runs to 455 residues: Rho GTPase-activating protein 3 (455 aa).

The segment covering 1–12 (MTNFSRSKSTGT) has biased composition (polar residues). The segment at 1 to 68 (MTNFSRSKST…HASRSGNGSG (68 aa)) is disordered. Residues 24–33 (GPDKYENIHN) are compositionally biased toward basic and acidic residues. Low complexity predominate over residues 43-54 (STTSTDYYDAST). Residues 55 to 64 (PLSSHASRSG) are compositionally biased toward polar residues. One can recognise a CRIB domain in the interval 105–118 (IGWPTEVKHVSHVT). Residues 153–331 (KSMQCSYDDR…LILMNLKERE (179 aa)) enclose the Rho-GAP domain. 2 disordered regions span residues 342–366 (KQTS…KPNN) and 432–455 (FVSN…SLPW). Residues 435 to 446 (NRDEGRKGREAW) show a composition bias toward basic and acidic residues.

As to expression, expressed in differentiating xylem cells.

It is found in the cell membrane. In terms of biological role, acts as a GTPase activator for the Rac-type GTPase by converting it to an inactive GDP-bound state. Involved in secondary wall pattern formation. In association with ROPGEF4, mediates local activation of ARAC10/ROP11 to initiate the distinct pattern of secondary cell walls in xylem cells. This is Rho GTPase-activating protein 3 (ROPGAP3) from Arabidopsis thaliana (Mouse-ear cress).